The primary structure comprises 700 residues: Dymeclin (700 aa).

Residue Gly2 is the site of N-myristoyl glycine attachment. At Ser347 the chain carries Phosphoserine.

Belongs to the dymeclin family.

The protein is Dymeclin of Drosophila pseudoobscura pseudoobscura (Fruit fly).